Reading from the N-terminus, the 252-residue chain is Hydroxyacylglutathione hydrolase (252 aa).

Zn(2+) is bound by residues His-54, His-56, Asp-58, His-59, His-113, Asp-132, and His-170.

The protein belongs to the metallo-beta-lactamase superfamily. Glyoxalase II family. In terms of assembly, monomer. Zn(2+) serves as cofactor.

The catalysed reaction is an S-(2-hydroxyacyl)glutathione + H2O = a 2-hydroxy carboxylate + glutathione + H(+). The protein operates within secondary metabolite metabolism; methylglyoxal degradation; (R)-lactate from methylglyoxal: step 2/2. Its function is as follows. Thiolesterase that catalyzes the hydrolysis of S-D-lactoyl-glutathione to form glutathione and D-lactic acid. The protein is Hydroxyacylglutathione hydrolase of Gloeobacter violaceus (strain ATCC 29082 / PCC 7421).